The sequence spans 196 residues: ATP-dependent Clp protease proteolytic subunit (196 aa).

Ser-96 acts as the Nucleophile in catalysis. His-121 is a catalytic residue.

This sequence belongs to the peptidase S14 family. As to quaternary structure, fourteen ClpP subunits assemble into 2 heptameric rings which stack back to back to give a disk-like structure with a central cavity, resembling the structure of eukaryotic proteasomes.

The protein resides in the cytoplasm. The catalysed reaction is Hydrolysis of proteins to small peptides in the presence of ATP and magnesium. alpha-casein is the usual test substrate. In the absence of ATP, only oligopeptides shorter than five residues are hydrolyzed (such as succinyl-Leu-Tyr-|-NHMec, and Leu-Tyr-Leu-|-Tyr-Trp, in which cleavage of the -Tyr-|-Leu- and -Tyr-|-Trp bonds also occurs).. Functionally, cleaves peptides in various proteins in a process that requires ATP hydrolysis. Has a chymotrypsin-like activity. Plays a major role in the degradation of misfolded proteins. This is ATP-dependent Clp protease proteolytic subunit from Streptococcus uberis (strain ATCC BAA-854 / 0140J).